The sequence spans 246 residues: 7-cyano-7-deazaguanine synthase (246 aa).

An ATP-binding site is contributed by 24–34; sequence FSGGLDSTTVL. Zn(2+)-binding residues include C209, C219, C222, and C225.

The protein belongs to the QueC family. Zn(2+) is required as a cofactor.

It carries out the reaction 7-carboxy-7-deazaguanine + NH4(+) + ATP = 7-cyano-7-deazaguanine + ADP + phosphate + H2O + H(+). Its pathway is purine metabolism; 7-cyano-7-deazaguanine biosynthesis. Catalyzes the ATP-dependent conversion of 7-carboxy-7-deazaguanine (CDG) to 7-cyano-7-deazaguanine (preQ(0)). The sequence is that of 7-cyano-7-deazaguanine synthase from Polynucleobacter asymbioticus (strain DSM 18221 / CIP 109841 / QLW-P1DMWA-1) (Polynucleobacter necessarius subsp. asymbioticus).